We begin with the raw amino-acid sequence, 418 residues long: Geranylgeranyl pyrophosphate synthase (418 aa).

A compositionally biased stretch (polar residues) spans 51 to 64; the sequence is TSSTGIPTSLNATP. The interval 51–73 is disordered; that stretch reads TSSTGIPTSLNATPTKPVLRPVP. Isopentenyl diphosphate contacts are provided by Lys143, Arg146, and His175. Residues Asp182 and Asp186 each contribute to the Mg(2+) site. Arg191 is a binding site for dimethylallyl diphosphate. Arg192 is an isopentenyl diphosphate binding site. The dimethylallyl diphosphate site is built by Lys269, Thr270, Gln305, Lys322, and Lys332.

The protein belongs to the FPP/GGPP synthase family. Mg(2+) is required as a cofactor.

Its subcellular location is the cytoplasm. The enzyme catalyses isopentenyl diphosphate + dimethylallyl diphosphate = (2E)-geranyl diphosphate + diphosphate. It carries out the reaction isopentenyl diphosphate + (2E)-geranyl diphosphate = (2E,6E)-farnesyl diphosphate + diphosphate. The catalysed reaction is isopentenyl diphosphate + (2E,6E)-farnesyl diphosphate = (2E,6E,10E)-geranylgeranyl diphosphate + diphosphate. The protein operates within isoprenoid biosynthesis; farnesyl diphosphate biosynthesis; farnesyl diphosphate from geranyl diphosphate and isopentenyl diphosphate: step 1/1. It participates in isoprenoid biosynthesis; geranyl diphosphate biosynthesis; geranyl diphosphate from dimethylallyl diphosphate and isopentenyl diphosphate: step 1/1. Its pathway is isoprenoid biosynthesis; geranylgeranyl diphosphate biosynthesis; geranylgeranyl diphosphate from farnesyl diphosphate and isopentenyl diphosphate: step 1/1. Its function is as follows. Catalyzes the trans-addition of the three molecules of IPP onto DMAPP to form geranylgeranyl pyrophosphate. This is Geranylgeranyl pyrophosphate synthase (GGS) from Fusarium fujikuroi (Bakanae and foot rot disease fungus).